A 374-amino-acid chain; its full sequence is tRNA N6-adenosine threonylcarbamoyltransferase (374 aa).

Fe cation contacts are provided by His117 and His121. Residues 140–144 (LVSGG), Asp174, Gly187, Asp191, and Asn283 contribute to the substrate site. A Fe cation-binding site is contributed by Asp311. Low complexity predominate over residues 337 to 352 (ADSSLPVTEPHVPGQG). The segment at 337–374 (ADSSLPVTEPHVPGQGHPHGHPHGHDHVHEVSKENLYS) is disordered. The span at 359-374 (HGHDHVHEVSKENLYS) shows a compositional bias: basic and acidic residues.

It belongs to the KAE1 / TsaD family. Fe(2+) serves as cofactor.

Its subcellular location is the cytoplasm. The catalysed reaction is L-threonylcarbamoyladenylate + adenosine(37) in tRNA = N(6)-L-threonylcarbamoyladenosine(37) in tRNA + AMP + H(+). Functionally, required for the formation of a threonylcarbamoyl group on adenosine at position 37 (t(6)A37) in tRNAs that read codons beginning with adenine. Is involved in the transfer of the threonylcarbamoyl moiety of threonylcarbamoyl-AMP (TC-AMP) to the N6 group of A37, together with TsaE and TsaB. TsaD likely plays a direct catalytic role in this reaction. In Streptomyces coelicolor (strain ATCC BAA-471 / A3(2) / M145), this protein is tRNA N6-adenosine threonylcarbamoyltransferase.